The sequence spans 637 residues: Neutral ceramidase (637 aa).

Residue His34 participates in Mg(2+) binding. The Zn(2+) site is built by His96 and His204. The active-site Nucleophile is Ser256. Positions 417 and 453 each coordinate Zn(2+). Mg(2+)-binding residues include Asp575, Asp577, and Thr580.

The protein belongs to the neutral ceramidase family. Requires Zn(2+) as cofactor. Mg(2+) is required as a cofactor.

It carries out the reaction an N-acylsphing-4-enine + H2O = sphing-4-enine + a fatty acid. It catalyses the reaction an N-acylsphinganine + H2O = sphinganine + a fatty acid. The enzyme catalyses an N-acyl-(4R)-4-hydroxysphinganine + H2O = (4R)-hydroxysphinganine + a fatty acid. The catalysed reaction is N-(9Z-octadecenoyl)-sphing-4-enine + H2O = sphing-4-enine + (9Z)-octadecenoate. It carries out the reaction N-(hexanoyl)sphing-4-enine + H2O = hexanoate + sphing-4-enine. It catalyses the reaction N-hexadecanoylsphing-4-enine + H2O = sphing-4-enine + hexadecanoate. The enzyme catalyses N-octadecanoylsphing-4-enine + H2O = sphing-4-enine + octadecanoate. The catalysed reaction is N-eicosanoyl-sphing-4-enine + H2O = eicosanoate + sphing-4-enine. It carries out the reaction N-(15Z-tetracosenoyl)-sphing-4-enine + H2O = (15Z)-tetracosenoate + sphing-4-enine. It catalyses the reaction N-tetracosanoyl-sphing-4-enine + H2O = tetracosanoate + sphing-4-enine. With respect to regulation, 90% of activity is inhibited by nickel, zinc and calcium ions. Magnesium, cobalt, copper and manganese ions inhibit between 50 and 80% of activity. Catalyzes the cleavage of the N-acyl linkage of the ceramides (Cers) to yield sphingosine (Sph) and free fatty acid. Also catalyzes the synthesis of Cers from Sph and fatty acid. Cers containning C6-C24 fatty acids are well hydrolyzed, and Cers with mono unsaturated fatty acids are much more hydrolyzed than those with saturated fatty acids. The sequence is that of Neutral ceramidase from Mycobacterium tuberculosis (strain ATCC 25618 / H37Rv).